Reading from the N-terminus, the 254-residue chain is Arginine/ornithine transport ATP-binding protein AotP (254 aa).

Residues 4–249 (LEVQDLHKRY…PQSDRLKQFL (246 aa)) form the ABC transporter domain. Residue 36-43 (GSSGSGKS) coordinates ATP.

It belongs to the ABC transporter superfamily.

The protein localises to the cell inner membrane. Part of the arginine-inducible binding-protein-dependent transport system for arginine and ornithine. Probably responsible for energy coupling to the transport system. The sequence is that of Arginine/ornithine transport ATP-binding protein AotP (aotP) from Pseudomonas aeruginosa (strain ATCC 15692 / DSM 22644 / CIP 104116 / JCM 14847 / LMG 12228 / 1C / PRS 101 / PAO1).